The following is a 150-amino-acid chain: Large ribosomal subunit protein bL9 (150 aa).

This sequence belongs to the bacterial ribosomal protein bL9 family.

Its function is as follows. Binds to the 23S rRNA. This is Large ribosomal subunit protein bL9 from Corynebacterium kroppenstedtii (strain DSM 44385 / JCM 11950 / CIP 105744 / CCUG 35717).